Here is a 668-residue protein sequence, read N- to C-terminus: tRNA 5-methylaminomethyl-2-thiouridine biosynthesis bifunctional protein MnmC (668 aa).

Positions 1–245 are tRNA (mnm(5)s(2)U34)-methyltransferase; sequence MKHYSIQPAN…KREMLCGVME (245 aa). Positions 270-668 are FAD-dependent cmnm(5)s(2)U34 oxidoreductase; that stretch reads IGGGIACALL…LLKGKAVKAG (399 aa).

The protein in the N-terminal section; belongs to the methyltransferase superfamily. tRNA (mnm(5)s(2)U34)-methyltransferase family. In the C-terminal section; belongs to the DAO family. FAD serves as cofactor.

The protein resides in the cytoplasm. The enzyme catalyses 5-aminomethyl-2-thiouridine(34) in tRNA + S-adenosyl-L-methionine = 5-methylaminomethyl-2-thiouridine(34) in tRNA + S-adenosyl-L-homocysteine + H(+). In terms of biological role, catalyzes the last two steps in the biosynthesis of 5-methylaminomethyl-2-thiouridine (mnm(5)s(2)U) at the wobble position (U34) in tRNA. Catalyzes the FAD-dependent demodification of cmnm(5)s(2)U34 to nm(5)s(2)U34, followed by the transfer of a methyl group from S-adenosyl-L-methionine to nm(5)s(2)U34, to form mnm(5)s(2)U34. In Shigella boydii serotype 4 (strain Sb227), this protein is tRNA 5-methylaminomethyl-2-thiouridine biosynthesis bifunctional protein MnmC.